A 193-amino-acid polypeptide reads, in one-letter code: Ion-translocating oxidoreductase complex subunit A (193 aa).

A run of 6 helical transmembrane segments spans residues 5-25, 39-59, 63-83, 102-122, 134-154, and 171-191; these read VLLLIGTVLVNNFVLVQFLGL, IGMSLATTFVLTLASVTSYLV, ILIPLDITYLRTMSFILVIAV, LLGIFLPLITTNCAVLGVALL, AVYGFGAAVGFSLVLVLFAAL, and SIALITAGLMSMAFMGFTGLV.

The protein belongs to the NqrDE/RnfAE family. In terms of assembly, the complex is composed of six subunits: RnfA, RnfB, RnfC, RnfD, RnfE and RnfG.

Its subcellular location is the cell inner membrane. In terms of biological role, part of a membrane-bound complex that couples electron transfer with translocation of ions across the membrane. In Pseudoalteromonas translucida (strain TAC 125), this protein is Ion-translocating oxidoreductase complex subunit A.